A 242-amino-acid chain; its full sequence is Sugar fermentation stimulation protein homolog (242 aa).

This sequence belongs to the SfsA family.

This chain is Sugar fermentation stimulation protein homolog, found in Nitratidesulfovibrio vulgaris (strain DP4) (Desulfovibrio vulgaris).